We begin with the raw amino-acid sequence, 1178 residues long: Tricalbin-2 (1178 aa).

Residues 1 to 17 (MSPNSSKTRTDQISSMP) show a composition bias toward polar residues. Residues 1-27 (MSPNSSKTRTDQISSMPGINEATKVES) form a disordered region. At 1-98 (MSPNSSKTRT…NLLPDKFYGD (98 aa)) the chain is on the cytoplasmic side. The chain crosses the membrane as a helical span at residues 99–119 (WYHEVAILIIAGLCSFVLGYF). Position 120 (Lys120) is a topological domain, extracellular. Residues 121 to 141 (FSLASVLIVMLTTGMLYRTSS) traverse the membrane as a helical segment. At 142–1178 (KKYRESLRDL…TGDKKSEEKQ (1037 aa)) the chain is on the cytoplasmic side. The region spanning 164 to 367 (DYESVEWLNT…PPFSLQLNIP (204 aa)) is the SMP-LTD domain. C2 domains are found at residues 358-481 (PPFS…EKVH), 504-628 (PKKL…LKVT), and 632-749 (RPVD…DKYT). Residues 784–821 (LSLEEAKEVDEINEKKDKLEKQKSTLDDKNISKEEKER) are a coiled coil. The region spanning 962-1086 (QVSWFPVTAT…DPESDTTFNI (125 aa)) is the C2 4 domain. At Ser991 the chain carries Phosphoserine.

The protein belongs to the tricalbin family. As to quaternary structure, interacts with TCB1 and TCB3 via its C-terminal domain.

The protein resides in the cell membrane. It localises to the endoplasmic reticulum membrane. In terms of biological role, may play a role in membrane trafficking. The chain is Tricalbin-2 (TCB2) from Saccharomyces cerevisiae (strain ATCC 204508 / S288c) (Baker's yeast).